The primary structure comprises 549 residues: Leucine-rich repeat, immunoglobulin-like domain and transmembrane domain-containing protein 2 (549 aa).

The first 22 residues, methionine 1–proline 22, serve as a signal peptide directing secretion. The LRRNT domain maps to phenylalanine 23–proline 54. 4 LRR repeats span residues serine 80–proline 103, glutamate 104–alanine 125, leucine 128–phenylalanine 149, and asparagine 152–asparagine 173. Asparagine 90 carries an N-linked (GlcNAc...) asparagine glycan. An LRRCT domain is found at asparagine 200–lysine 252. One can recognise an Ig-like domain in the interval proline 253 to valine 339. The N-linked (GlcNAc...) asparagine glycan is linked to asparagine 261. Cysteine 274 and cysteine 327 are joined by a disulfide. Positions glutamate 361 to valine 447 constitute a Fibronectin type-III domain. Residues leucine 463 to valine 483 traverse the membrane as a helical segment. An N-linked (GlcNAc...) asparagine glycan is attached at asparagine 491. Positions phenylalanine 521–serine 549 are disordered. The segment covering glutamate 538–serine 549 has biased composition (acidic residues).

Interacts with LRIT1; may form a heterodimer with LRIT1.

The protein localises to the membrane. The chain is Leucine-rich repeat, immunoglobulin-like domain and transmembrane domain-containing protein 2 (Lrit2) from Mus musculus (Mouse).